We begin with the raw amino-acid sequence, 203 residues long: Dephospho-CoA kinase (203 aa).

Residues 10–203 (IIGITGNIGS…LTGGAKGGRG (194 aa)) enclose the DPCK domain. 18 to 23 (GSGKST) serves as a coordination point for ATP.

It belongs to the CoaE family.

It localises to the cytoplasm. It catalyses the reaction 3'-dephospho-CoA + ATP = ADP + CoA + H(+). Its pathway is cofactor biosynthesis; coenzyme A biosynthesis; CoA from (R)-pantothenate: step 5/5. In terms of biological role, catalyzes the phosphorylation of the 3'-hydroxyl group of dephosphocoenzyme A to form coenzyme A. In Thermus thermophilus (strain ATCC BAA-163 / DSM 7039 / HB27), this protein is Dephospho-CoA kinase.